The primary structure comprises 62 residues: uncharacterized protein (62 aa).

This is an uncharacterized protein from Archaeoglobus fulgidus (strain ATCC 49558 / DSM 4304 / JCM 9628 / NBRC 100126 / VC-16).